The chain runs to 187 residues: Thermosensitive gluconokinase (187 aa).

An ATP-binding site is contributed by Gly10–Thr17.

Belongs to the gluconokinase GntK/GntV family.

The catalysed reaction is D-gluconate + ATP = 6-phospho-D-gluconate + ADP + H(+). It participates in carbohydrate acid metabolism; L-idonate degradation. The protein is Thermosensitive gluconokinase (idnK) of Escherichia coli (strain K12).